Here is a 363-residue protein sequence, read N- to C-terminus: D-alanine--D-alanine ligase (363 aa).

The ATP-grasp domain occupies 148–353; the sequence is KKLLAAEGLP…YGTLVSTLIE (206 aa). 176 to 231 provides a ligand contact to ATP; that stretch reads RERLGLPVFVKPARAGSSIGITKVDDWAALDTAIAAAREHDPKVIVEAGIVGREVE. Residues Asp-308, Glu-320, and Asn-322 each coordinate Mg(2+).

The protein belongs to the D-alanine--D-alanine ligase family. It depends on Mg(2+) as a cofactor. Mn(2+) is required as a cofactor.

Its subcellular location is the cytoplasm. The catalysed reaction is 2 D-alanine + ATP = D-alanyl-D-alanine + ADP + phosphate + H(+). It functions in the pathway cell wall biogenesis; peptidoglycan biosynthesis. In terms of biological role, cell wall formation. The protein is D-alanine--D-alanine ligase of Nocardia farcinica (strain IFM 10152).